The primary structure comprises 315 residues: ATP synthase gamma chain (315 aa).

It belongs to the ATPase gamma chain family. As to quaternary structure, F-type ATPases have 2 components, CF(1) - the catalytic core - and CF(0) - the membrane proton channel. CF(1) has five subunits: alpha(3), beta(3), gamma(1), delta(1), epsilon(1). CF(0) has three main subunits: a, b and c.

The protein resides in the cellular thylakoid membrane. Its function is as follows. Produces ATP from ADP in the presence of a proton gradient across the membrane. The gamma chain is believed to be important in regulating ATPase activity and the flow of protons through the CF(0) complex. The sequence is that of ATP synthase gamma chain from Nostoc sp. (strain PCC 7120 / SAG 25.82 / UTEX 2576).